A 736-amino-acid polypeptide reads, in one-letter code: Eukaryotic translation initiation factor 3 subunit B (736 aa).

The interval 1–94 (MAAVFDDIRL…LFIEFEDAGA (94 aa)) is sufficient for interaction with HCR1 and TIF32. Residues 1–219 (MAAVFDDIRL…GIASWGGPQF (219 aa)) form a sufficient for interaction with PIC8 region. One can recognise an RRM domain in the interval 37–120 (RYVVVDGAPV…HRLWVNGLDD (84 aa)). WD repeat units follow at residues 140–182 (EFEA…PENV), 186–224 (RRNW…RLRR), 226–244 (AHPD…YLVT), 245–284 (FSSE…CVKT), 288–328 (PPQQ…QLLG), 332–375 (MKIE…QSCK), 443–483 (EIKD…VSFY), 511–557 (AIDG…TEKI), 566–604 (ATLR…KAEN), and 616–662 (VREE…QDAM).

This sequence belongs to the eIF-3 subunit B family. In terms of assembly, component of the eukaryotic translation initiation factor 3 (eIF-3) complex.

It is found in the cytoplasm. Its function is as follows. RNA-binding component of the eukaryotic translation initiation factor 3 (eIF-3) complex, which is involved in protein synthesis of a specialized repertoire of mRNAs and, together with other initiation factors, stimulates binding of mRNA and methionyl-tRNAi to the 40S ribosome. The eIF-3 complex specifically targets and initiates translation of a subset of mRNAs involved in cell proliferation. The polypeptide is Eukaryotic translation initiation factor 3 subunit B (Eremothecium gossypii (strain ATCC 10895 / CBS 109.51 / FGSC 9923 / NRRL Y-1056) (Yeast)).